A 569-amino-acid polypeptide reads, in one-letter code: Small ribosomal subunit protein bS1 (569 aa).

S1 motif domains are found at residues 52-116 (GAIL…LSRE), 134-199 (GSIV…VSRR), 220-288 (GERR…LGLK), 305-375 (GKRV…LGLK), 392-462 (GLRV…LGVK), and 479-548 (GSDI…LSIK).

It belongs to the bacterial ribosomal protein bS1 family.

In terms of biological role, binds mRNA; thus facilitating recognition of the initiation point. It is needed to translate mRNA with a short Shine-Dalgarno (SD) purine-rich sequence. This chain is Small ribosomal subunit protein bS1 (rpsA), found in Chlamydia trachomatis serovar D (strain ATCC VR-885 / DSM 19411 / UW-3/Cx).